A 178-amino-acid polypeptide reads, in one-letter code: Adenine phosphoribosyltransferase (178 aa).

The protein belongs to the purine/pyrimidine phosphoribosyltransferase family. Homodimer.

Its subcellular location is the cytoplasm. The enzyme catalyses AMP + diphosphate = 5-phospho-alpha-D-ribose 1-diphosphate + adenine. It functions in the pathway purine metabolism; AMP biosynthesis via salvage pathway; AMP from adenine: step 1/1. Catalyzes a salvage reaction resulting in the formation of AMP, that is energically less costly than de novo synthesis. The polypeptide is Adenine phosphoribosyltransferase (Streptomyces clavuligerus).